A 599-amino-acid polypeptide reads, in one-letter code: uncharacterized protein (599 aa).

Residues 1–10 (MEQQSENVYF) show a composition bias toward polar residues. Positions 1 to 146 (MEQQSENVYF…EPSFTLTELP (146 aa)) are disordered. Residues 11 to 20 (SGSESESLSD) show a composition bias toward low complexity. Over residues 24–44 (RAQPQNQNSDNSRSASLTPPD) the composition is skewed to polar residues. Composition is skewed to acidic residues over residues 46–56 (SDLEDYVDSDS) and 89–114 (NGSDDDSEDEDESNDEQDLVESEEED). The segment covering 118–127 (RSSSRSAMDI) has biased composition (low complexity). Residues 128 to 138 (SSEEDSGDDEP) are compositionally biased toward acidic residues.

Belongs to the IIV-6 229L family.

This is an uncharacterized protein from Aedes vexans (Inland floodwater mosquito).